The primary structure comprises 268 residues: Adenosylcobinamide-GDP ribazoletransferase (268 aa).

Transmembrane regions (helical) follow at residues 54-74 (IAGL…GVLW), 80-100 (AVVL…DGLS), 124-144 (IGVM…AFLA), 150-170 (WLTA…YGIV), 202-222 (ALAL…VWMV), and 243-263 (GALC…SAPM).

The protein belongs to the CobS family. Requires Mg(2+) as cofactor.

The protein localises to the cell membrane. It catalyses the reaction alpha-ribazole + adenosylcob(III)inamide-GDP = adenosylcob(III)alamin + GMP + H(+). The catalysed reaction is alpha-ribazole 5'-phosphate + adenosylcob(III)inamide-GDP = adenosylcob(III)alamin 5'-phosphate + GMP + H(+). It functions in the pathway cofactor biosynthesis; adenosylcobalamin biosynthesis; adenosylcobalamin from cob(II)yrinate a,c-diamide: step 7/7. In terms of biological role, joins adenosylcobinamide-GDP and alpha-ribazole to generate adenosylcobalamin (Ado-cobalamin). Also synthesizes adenosylcobalamin 5'-phosphate from adenosylcobinamide-GDP and alpha-ribazole 5'-phosphate. This Roseiflexus sp. (strain RS-1) protein is Adenosylcobinamide-GDP ribazoletransferase.